Consider the following 127-residue polypeptide: UPF0738 protein Bsph_1225 (127 aa).

It belongs to the UPF0738 family.

The protein is UPF0738 protein Bsph_1225 of Lysinibacillus sphaericus (strain C3-41).